Here is a 441-residue protein sequence, read N- to C-terminus: Chromosome partition protein MukF (441 aa).

The tract at residues 208–236 (LDETSGNLRELQDTLNAAGDKLQAQLLRI) is leucine-zipper.

The protein belongs to the MukF family. In terms of assembly, interacts, and probably forms a ternary complex, with MukE and MukB via its C-terminal region. The complex formation is stimulated by calcium or magnesium. It is required for an interaction between MukE and MukB.

It is found in the cytoplasm. Its subcellular location is the nucleoid. In terms of biological role, involved in chromosome condensation, segregation and cell cycle progression. May participate in facilitating chromosome segregation by condensation DNA from both sides of a centrally located replisome during cell division. Not required for mini-F plasmid partitioning. Probably acts via its interaction with MukB and MukE. Overexpression results in anucleate cells. It has a calcium binding activity. This chain is Chromosome partition protein MukF, found in Pasteurella multocida (strain Pm70).